Here is a 136-residue protein sequence, read N- to C-terminus: Probable S-adenosyl-L-methionine-binding protein PH1056 (136 aa).

A TsaA-like domain is found at Ile-8–Glu-126. Residues His-48–Lys-49, Arg-78, and Glu-106–Thr-109 each bind S-adenosyl-L-methionine.

Belongs to the tRNA methyltransferase O family.

This chain is Probable S-adenosyl-L-methionine-binding protein PH1056, found in Pyrococcus horikoshii (strain ATCC 700860 / DSM 12428 / JCM 9974 / NBRC 100139 / OT-3).